Here is a 458-residue protein sequence, read N- to C-terminus: Bifunctional protein GlmU (458 aa).

The segment at 1–231 (MSNRALSVVV…QTEVEGVNNR (231 aa)) is pyrophosphorylase. UDP-N-acetyl-alpha-D-glucosamine contacts are provided by residues 11 to 14 (LAAG), K25, Q78, 83 to 84 (GT), 105 to 107 (YGD), G142, E156, N171, and N229. A Mg(2+)-binding site is contributed by D107. N229 contacts Mg(2+). Residues 232 to 252 (LQLARLERLFQREQAERLLLA) form a linker region. The N-acetyltransferase stretch occupies residues 253–458 (GVMLSDPDRF…ANWTRPVKKK (206 aa)). The UDP-N-acetyl-alpha-D-glucosamine site is built by R335 and K353. The Proton acceptor role is filled by H365. Residues Y368 and N379 each contribute to the UDP-N-acetyl-alpha-D-glucosamine site. Acetyl-CoA contacts are provided by residues A382, 388 to 389 (NY), S407, A425, and R442.

In the N-terminal section; belongs to the N-acetylglucosamine-1-phosphate uridyltransferase family. This sequence in the C-terminal section; belongs to the transferase hexapeptide repeat family. Homotrimer. Mg(2+) serves as cofactor.

Its subcellular location is the cytoplasm. It carries out the reaction alpha-D-glucosamine 1-phosphate + acetyl-CoA = N-acetyl-alpha-D-glucosamine 1-phosphate + CoA + H(+). The catalysed reaction is N-acetyl-alpha-D-glucosamine 1-phosphate + UTP + H(+) = UDP-N-acetyl-alpha-D-glucosamine + diphosphate. The protein operates within nucleotide-sugar biosynthesis; UDP-N-acetyl-alpha-D-glucosamine biosynthesis; N-acetyl-alpha-D-glucosamine 1-phosphate from alpha-D-glucosamine 6-phosphate (route II): step 2/2. Its pathway is nucleotide-sugar biosynthesis; UDP-N-acetyl-alpha-D-glucosamine biosynthesis; UDP-N-acetyl-alpha-D-glucosamine from N-acetyl-alpha-D-glucosamine 1-phosphate: step 1/1. It functions in the pathway bacterial outer membrane biogenesis; LPS lipid A biosynthesis. Functionally, catalyzes the last two sequential reactions in the de novo biosynthetic pathway for UDP-N-acetylglucosamine (UDP-GlcNAc). The C-terminal domain catalyzes the transfer of acetyl group from acetyl coenzyme A to glucosamine-1-phosphate (GlcN-1-P) to produce N-acetylglucosamine-1-phosphate (GlcNAc-1-P), which is converted into UDP-GlcNAc by the transfer of uridine 5-monophosphate (from uridine 5-triphosphate), a reaction catalyzed by the N-terminal domain. In Sodalis glossinidius (strain morsitans), this protein is Bifunctional protein GlmU.